A 341-amino-acid polypeptide reads, in one-letter code: ATPase GET3 (341 aa).

An ATP-binding site is contributed by 34 to 41 (KGGVGKTT). The active site involves Asp63. Residues Glu245 and Asn272 each contribute to the ATP site. Zn(2+)-binding residues include Cys283 and Cys286.

The protein belongs to the arsA ATPase family. As to quaternary structure, homodimer.

The protein resides in the cytoplasm. Its subcellular location is the endoplasmic reticulum. In terms of biological role, ATPase required for the post-translational delivery of tail-anchored (TA) proteins to the endoplasmic reticulum. Recognizes and selectively binds the transmembrane domain of TA proteins in the cytosol. This complex then targets to the endoplasmic reticulum by membrane-bound receptors, where the tail-anchored protein is released for insertion. This process is regulated by ATP binding and hydrolysis. ATP binding drives the homodimer towards the closed dimer state, facilitating recognition of newly synthesized TA membrane proteins. ATP hydrolysis is required for insertion. Subsequently, the homodimer reverts towards the open dimer state, lowering its affinity for the membrane-bound receptor, and returning it to the cytosol to initiate a new round of targeting. The sequence is that of ATPase GET3 from Ajellomyces capsulatus (strain H143) (Darling's disease fungus).